Here is a 600-residue protein sequence, read N- to C-terminus: Probable tripeptidyl-peptidase SED4 (600 aa).

An N-terminal signal peptide occupies residues 1–22 (MVSFTLRAIGACLIGLPALITA). The propeptide at 23–202 (APTSHVSNDF…SVFTSDLEIT (180 aa)) is removed in mature form. 2 N-linked (GlcNAc...) asparagine glycosylation sites follow: N210 and N281. The Peptidase S53 domain maps to 212-600 (TITPDCIREL…FEKLSKLVLI (389 aa)). Residues E288 and D292 each act as charge relay system in the active site. N-linked (GlcNAc...) asparagine glycosylation is found at N323 and N404. The Charge relay system role is filled by S504. The Ca(2+) site is built by D546 and I547. N-linked (GlcNAc...) asparagine glycosylation is present at N575. Ca(2+) is bound by residues G579 and D581.

Ca(2+) serves as cofactor.

The protein resides in the secreted. It localises to the extracellular space. It carries out the reaction Release of an N-terminal tripeptide from a polypeptide.. In terms of biological role, secreted tripeptidyl-peptidase which degrades proteins at acidic pHs and is involved in virulence. The sequence is that of Probable tripeptidyl-peptidase SED4 (SED4) from Arthroderma benhamiae (strain ATCC MYA-4681 / CBS 112371) (Trichophyton mentagrophytes).